A 274-amino-acid polypeptide reads, in one-letter code: MPELPEVETTKQGIKPHLEGRMITAVQVRNRKLRLPVPLNLNELCQGKHITAITRRGKYILLHMDKGYLLIHLGMSGHLRIVSQTANPQKHDHVDLHINNGLALRFCDPRRFGLFIYIDENPYQHPLLAHLGPEPLSDDFNSEYLLRKAANKSQSIKSFIMDSQIVVGIGNIYAAESLFLAKIHPNTSAKKITTEEFNSLTGHIKKILESAIEAGGTTLRDFYSSDGKPGYFRFALKVYGRKNLPCLVCENKIETVVIAGRHSAFCPHCQPIIT.

Pro-2 functions as the Schiff-base intermediate with DNA in the catalytic mechanism. The active-site Proton donor is the Glu-3. The active-site Proton donor; for beta-elimination activity is the Lys-58. Positions 91, 110, and 152 each coordinate DNA. The FPG-type zinc-finger motif lies at 237–271 (KVYGRKNLPCLVCENKIETVVIAGRHSAFCPHCQP). Arg-261 serves as the catalytic Proton donor; for delta-elimination activity.

This sequence belongs to the FPG family. In terms of assembly, monomer. It depends on Zn(2+) as a cofactor.

The enzyme catalyses Hydrolysis of DNA containing ring-opened 7-methylguanine residues, releasing 2,6-diamino-4-hydroxy-5-(N-methyl)formamidopyrimidine.. The catalysed reaction is 2'-deoxyribonucleotide-(2'-deoxyribose 5'-phosphate)-2'-deoxyribonucleotide-DNA = a 3'-end 2'-deoxyribonucleotide-(2,3-dehydro-2,3-deoxyribose 5'-phosphate)-DNA + a 5'-end 5'-phospho-2'-deoxyribonucleoside-DNA + H(+). Functionally, involved in base excision repair of DNA damaged by oxidation or by mutagenic agents. Acts as a DNA glycosylase that recognizes and removes damaged bases. Has a preference for oxidized purines, such as 7,8-dihydro-8-oxoguanine (8-oxoG). Has AP (apurinic/apyrimidinic) lyase activity and introduces nicks in the DNA strand. Cleaves the DNA backbone by beta-delta elimination to generate a single-strand break at the site of the removed base with both 3'- and 5'-phosphates. This chain is Formamidopyrimidine-DNA glycosylase, found in Legionella pneumophila subsp. pneumophila (strain Philadelphia 1 / ATCC 33152 / DSM 7513).